A 624-amino-acid chain; its full sequence is Sulfite reductase [ferredoxin] (624 aa).

Residues 52–137 (YQQDNRDNRV…ENLGSTISAC (86 aa)) constitute a cross-link (3'-(S-cysteinyl)-tyrosine (Tyr-Cys)). Cysteine 446, cysteine 452, cysteine 491, and cysteine 495 together coordinate [4Fe-4S] cluster. Cysteine 495 is a binding site for siroheme.

The protein belongs to the nitrite and sulfite reductase 4Fe-4S domain family. As to quaternary structure, monomer. Siroheme serves as cofactor. [4Fe-4S] cluster is required as a cofactor.

The catalysed reaction is hydrogen sulfide + 6 oxidized [2Fe-2S]-[ferredoxin] + 3 H2O = sulfite + 6 reduced [2Fe-2S]-[ferredoxin] + 7 H(+). Functionally, catalyzes the reduction of sulfite to sulfide, a step in the biosynthesis of sulfur-containing amino acids and cofactors. The chain is Sulfite reductase [ferredoxin] (sir) from Synechococcus elongatus (strain ATCC 33912 / PCC 7942 / FACHB-805) (Anacystis nidulans R2).